The chain runs to 324 residues: Glutathione synthetase (324 aa).

In terms of domain architecture, ATP-grasp spans 129-313 (KLYALHFPDL…LEDEIVDWLV (185 aa)). 155–211 (VDIHGRAVIKPLDGKGGEGIFLLARADRNLNAIIEASTAYGTRHVMVQRYLEESRQG) serves as a coordination point for ATP. Positions 284 and 286 each coordinate Mg(2+).

This sequence belongs to the prokaryotic GSH synthase family. It depends on Mg(2+) as a cofactor. Mn(2+) serves as cofactor.

It catalyses the reaction gamma-L-glutamyl-L-cysteine + glycine + ATP = glutathione + ADP + phosphate + H(+). It functions in the pathway sulfur metabolism; glutathione biosynthesis; glutathione from L-cysteine and L-glutamate: step 2/2. The chain is Glutathione synthetase from Gloeobacter violaceus (strain ATCC 29082 / PCC 7421).